The primary structure comprises 453 residues: Methionine aminopeptidase 2-1 (453 aa).

Over residues 1-12 the composition is skewed to basic and acidic residues; it reads MGSKTPDGHRQS. Residues 1–101 are disordered; that stretch reads MGSKTPDGHR…TTPPRVPLST (101 aa). A compositionally biased stretch (acidic residues) spans 46 to 57; that stretch reads GEDDDDDDENEE. The span at 67 to 82 shows a compositional bias: basic residues; it reads KKKKRKKSKKKNKKSK. His-210 contacts substrate. Positions 231, 242, and 306 each coordinate a divalent metal cation. A substrate-binding site is contributed by His-314. Residues Glu-339 and Glu-434 each contribute to the a divalent metal cation site.

It belongs to the peptidase M24A family. Methionine aminopeptidase eukaryotic type 2 subfamily. The cofactor is Co(2+). It depends on Zn(2+) as a cofactor. Requires Mn(2+) as cofactor. Fe(2+) serves as cofactor.

It is found in the cytoplasm. The catalysed reaction is Release of N-terminal amino acids, preferentially methionine, from peptides and arylamides.. Its function is as follows. Cotranslationally removes the N-terminal methionine from nascent proteins. The N-terminal methionine is often cleaved when the second residue in the primary sequence is small and uncharged (Met-Ala-, Cys, Gly, Pro, Ser, Thr, or Val). This chain is Methionine aminopeptidase 2-1, found in Aspergillus terreus (strain NIH 2624 / FGSC A1156).